Here is a 362-residue protein sequence, read N- to C-terminus: Shewanella-like protein phosphatase 1 (362 aa).

An N-terminal signal peptide occupies residues 1-23 (MIFKKALYILLFLYIAIVKKGES). Mn(2+) contacts are provided by D65, H67, D101, and N136. Catalysis depends on H137, which acts as the Proton donor. H196 contributes to the Mn(2+) binding site.

It belongs to the metallophosphoesterase superfamily. SLP family. Requires Mn(2+) as cofactor.

Functionally, phosphatase which plays an essential role in the development and differentiation of the ookinete and in the formation of ookinete micronemes. The chain is Shewanella-like protein phosphatase 1 from Plasmodium berghei (strain Anka).